Consider the following 66-residue polypeptide: Toxin Boma6a (66 aa).

Positions 2–64 constitute an LCN-type CS-alpha/beta domain; the sequence is RDAYIAQNYN…VPIKVEGKCH (63 aa). Intrachain disulfides connect C12/C63, C16/C36, C22/C46, and C26/C48.

Belongs to the long (4 C-C) scorpion toxin superfamily. Sodium channel inhibitor family. Alpha subfamily. Expressed by the venom gland.

The protein localises to the secreted. Its function is as follows. Alpha toxins bind voltage-independently at site-3 of sodium channels (Nav) and inhibit the inactivation of the activated channels, thereby blocking neuronal transmission. The chain is Toxin Boma6a from Buthus occitanus mardochei (Moroccan scorpion).